The sequence spans 517 residues: Ubiquitin carboxyl-terminal hydrolase 30 (517 aa).

Over 1–35 the chain is Mitochondrial intermembrane; sequence MLSSRAEAAMTAADRAIQRFLRTGAAVRYKVMKNW. The helical transmembrane segment at 36 to 56 threads the bilayer; that stretch reads GVIGGIAAALAAGIYVIWGPI. The Cytoplasmic segment spans residues 57–517; that stretch reads TERKKRRKGL…HQSQECKSEE (461 aa). The region spanning 68–502 is the USP domain; that stretch reads PGLVNLGNTC…SAYLLFYERV (435 aa). Residue C77 is the Nucleophile of the active site. Residues K235 and K289 each participate in a glycyl lysine isopeptide (Lys-Gly) (interchain with G-Cter in ubiquitin) cross-link. The disordered stretch occupies residues 364–395; that stretch reads SQHNPKLNKNPGPTLELQDGPGAPTPVLNQPG. The Proton acceptor role is filled by H452.

Belongs to the peptidase C19 family. Post-translationally, ubiquitinated by parkin (PRKN) at Lys-235 and Lys-289, leading to its degradation. As to expression, expressed in skeletal muscle, pancreas, liver and kidney.

It localises to the mitochondrion outer membrane. The catalysed reaction is Thiol-dependent hydrolysis of ester, thioester, amide, peptide and isopeptide bonds formed by the C-terminal Gly of ubiquitin (a 76-residue protein attached to proteins as an intracellular targeting signal).. With respect to regulation, inhibited by the diterpenoid derivative 15-oxospiramilactone (S3). In terms of biological role, deubiquitinating enzyme tethered to the mitochondrial outer membrane that acts as a key inhibitor of mitophagy by counteracting the action of parkin (PRKN): hydrolyzes ubiquitin attached by parkin on target proteins, such as RHOT1/MIRO1 and TOMM20, thereby blocking parkin's ability to drive mitophagy. Preferentially cleaves 'Lys-6'- and 'Lys-11'-linked polyubiquitin chains, 2 types of linkage that participate in mitophagic signaling. Does not cleave efficiently polyubiquitin phosphorylated at 'Ser-65'. Acts as a negative regulator of mitochondrial fusion by mediating deubiquitination of MFN1 and MFN2. The chain is Ubiquitin carboxyl-terminal hydrolase 30 from Homo sapiens (Human).